The following is a 124-amino-acid chain: Large ribosomal subunit protein bL12 (124 aa).

The protein belongs to the bacterial ribosomal protein bL12 family. Homodimer. Part of the ribosomal stalk of the 50S ribosomal subunit. Forms a multimeric L10(L12)X complex, where L10 forms an elongated spine to which 2 to 4 L12 dimers bind in a sequential fashion. Binds GTP-bound translation factors.

Forms part of the ribosomal stalk which helps the ribosome interact with GTP-bound translation factors. Is thus essential for accurate translation. In Borreliella burgdorferi (strain ATCC 35210 / DSM 4680 / CIP 102532 / B31) (Borrelia burgdorferi), this protein is Large ribosomal subunit protein bL12.